A 253-amino-acid polypeptide reads, in one-letter code: FGFR1 oncogene partner 2 homolog (253 aa).

Residues Ile-5–Tyr-104 adopt a coiled-coil conformation. The residue at position 140 (Ser-140) is a Phosphoserine. A coiled-coil region spans residues Leu-160–Glu-223. Residues Asp-231–Ser-253 form a disordered region. The span at Glu-235–Ser-253 shows a compositional bias: polar residues.

It belongs to the SIKE family.

The protein localises to the cytoplasm. Its function is as follows. May be involved in wound healing pathway. The polypeptide is FGFR1 oncogene partner 2 homolog (Fgfr1op2) (Mus musculus (Mouse)).